The sequence spans 614 residues: Probable ATP-dependent RNA helicase DDX5 (614 aa).

Positions 1–15 are enriched in basic and acidic residues; sequence MSGYSSDRDRGRDRG. The tract at residues 1–39 is disordered; that stretch reads MSGYSSDRDRGRDRGFGAPRFGGSRAGPLSGKKFGNPGE. Ser-24 is modified (phosphoserine). Lys-32 bears the N6-acetyllysine; alternate mark. Residue Lys-32 forms a Glycyl lysine isopeptide (Lys-Gly) (interchain with G-Cter in SUMO2); alternate linkage. N6-acetyllysine is present on residues Lys-33 and Lys-40. A Glycyl lysine isopeptide (Lys-Gly) (interchain with G-Cter in SUMO2) cross-link involves residue Lys-45. Lys-53 is covalently cross-linked (Glycyl lysine isopeptide (Lys-Gly) (interchain with G-Cter in SUMO2); alternate). Residue Lys-53 forms a Glycyl lysine isopeptide (Lys-Gly) (interchain with G-Cter in SUMO); alternate linkage. Lys-53 is covalently cross-linked (Glycyl lysine isopeptide (Lys-Gly) (interchain with G-Cter in SUMO1); alternate). The Q motif signature appears at 94 to 122; it reads LNFYEANFPANVMDVIARQNFTEPTAIQA. Residues 114-116, Gln-121, and 138-145 contribute to the ATP site; these read FTE and AQTGSGKT. Residues 125-300 enclose the Helicase ATP-binding domain; the sequence is WPVALSGLDM…EDFLKDYIHI (176 aa). Position 236 is an N6-acetyllysine (Lys-236). The DEAD box motif lies at 248-251; sequence DEAD. Tyr-297 bears the Phosphotyrosine mark. Positions 328-475 constitute a Helicase C-terminal domain; the sequence is KLIRLMEEIM…AINPKLLQLV (148 aa). Residues Lys-340, Lys-343, Lys-388, Lys-391, Lys-411, Lys-437, Lys-451, and Lys-470 each participate in a glycyl lysine isopeptide (Lys-Gly) (interchain with G-Cter in SUMO2) cross-link. A disordered region spans residues 477 to 504; that stretch reads DRGSGRSRGRGGMKDDRRDRYSAGKRGG. Residues 477–614 form a transactivation domain region; the sequence is DRGSGRSRGR…GYPMPTGYSQ (138 aa). Ser-480 is modified (phosphoserine). Residues 488-498 show a composition bias toward basic and acidic residues; sequence GMKDDRRDRYS. Ser-520 is modified (phosphoserine). Residue Lys-523 forms a Glycyl lysine isopeptide (Lys-Gly) (interchain with G-Cter in SUMO2) linkage.

This sequence belongs to the DEAD box helicase family. DDX5/DBP2 subfamily. In terms of assembly, identified in the spliceosome C complex. Component of a ribonucleoprotein complex containing mRNAs and RNA-binding proteins including DDX5, HNRNPH2 and SRSF1 as well as splicing regulator ARVCF. Interacts with RBM4; the interaction occurs in an RNA-independent manner. Interacts with AGO1 and AGO2. Interacts with ESR1, AR, EP300, CREBBP, POLR2A, TP53, RUNX2 and HDAC1. Self-associates. Interacts with DDX17. Interacts with BRDT. The large PER complex involved in the repression of transcriptional termination is composed of at least PER2, CDK9, DDX5, DHX9, NCBP1 and POLR2A (active). Interacts with DHX36; this interaction occurs in a RNA-dependent manner. Interacts with NUPR1. Interacts with ERCC6. Interacts with DDX3X in the cytoplasm; this interaction may be more efficient when both proteins are unphosphorylated. Post-translationally, arg-502 is dimethylated, probably to asymmetric dimethylarginine. Sumoylated; sumoylation, promoted by PIAS1, promotes interaction with HDAC1 and transcriptional repression activity. Sumoylation also significantly increases stability, and reduces polyubiquitination. In terms of processing, polyubiquitinated, leading to proteasomal degradation. Post-translationally, weakly phosphorylated in the G1/S phase of the cell cycle and much more at G2/M, especially at Thr and Tyr residues.

The protein resides in the nucleus. It is found in the nucleolus. It localises to the nucleus speckle. The protein localises to the cytoplasm. It catalyses the reaction ATP + H2O = ADP + phosphate + H(+). Involved in the alternative regulation of pre-mRNA splicing; its RNA helicase activity is necessary for increasing tau exon 10 inclusion and occurs in a RBM4-dependent manner. Binds to the tau pre-mRNA in the stem-loop region downstream of exon 10. The rate of ATP hydrolysis is highly stimulated by single-stranded RNA. Involved in transcriptional regulation; the function is independent of the RNA helicase activity. Transcriptional coactivator for androgen receptor AR but probably not ESR1. Synergizes with DDX17 and SRA1 RNA to activate MYOD1 transcriptional activity and involved in skeletal muscle differentiation. Transcriptional coactivator for p53/TP53 and involved in p53/TP53 transcriptional response to DNA damage and p53/TP53-dependent apoptosis. Transcriptional coactivator for RUNX2 and involved in regulation of osteoblast differentiation. Acts as a transcriptional repressor in a promoter-specific manner; the function probably involves association with histone deacetylases, such as HDAC1. As component of a large PER complex is involved in the inhibition of 3' transcriptional termination of circadian target genes such as PER1 and NR1D1 and the control of the circadian rhythms. The polypeptide is Probable ATP-dependent RNA helicase DDX5 (DDX5) (Homo sapiens (Human)).